Here is a 469-residue protein sequence, read N- to C-terminus: Ubiquitin carboxyl-terminal hydrolase MINDY-1 (469 aa).

Positions M1–L85 are disordered. The segment covering H34–A53 has biased composition (basic and acidic residues). S103 is subject to Phosphoserine. C137 serves as the catalytic Nucleophile. Catalysis depends on H319, which acts as the Proton acceptor. Positions Q388–Q426 are ubiquitin-binding domain (UBD). The segment at Q428–L469 is disordered. The residue at position 441 (S441) is a Phosphoserine. Positions A453–L469 are enriched in basic and acidic residues.

Belongs to the MINDY deubiquitinase family. FAM63 subfamily.

The enzyme catalyses Thiol-dependent hydrolysis of ester, thioester, amide, peptide and isopeptide bonds formed by the C-terminal Gly of ubiquitin (a 76-residue protein attached to proteins as an intracellular targeting signal).. Functionally, hydrolase that can specifically remove 'Lys-48'-linked conjugated ubiquitin from proteins. Has exodeubiquitinase activity and has a preference for long polyubiquitin chains. May play a regulatory role at the level of protein turnover. The polypeptide is Ubiquitin carboxyl-terminal hydrolase MINDY-1 (MINDY1) (Pongo abelii (Sumatran orangutan)).